A 286-amino-acid chain; its full sequence is E3 ubiquitin-protein ligase SINA-like 7 (286 aa).

An RING-type zinc finger spans residues 51 to 87; the sequence is CPICYEAFTIPIFQCDNGHLACSSCCPKLNNKCPACT. Residues 101 to 285 are SBD; sequence VLESILIPCP…MRISVKKLNK (185 aa). The SIAH-type zinc finger occupies 104 to 162; the sequence is SILIPCPNAKLGCKKNVSYGKELTHEKECMFSHCACPALDCNYTSSYKDLYTHYRITHM. Zn(2+)-binding residues include cysteine 109, cysteine 116, histidine 128, cysteine 132, cysteine 139, cysteine 144, histidine 156, and histidine 161.

Belongs to the SINA (Seven in absentia) family.

It catalyses the reaction S-ubiquitinyl-[E2 ubiquitin-conjugating enzyme]-L-cysteine + [acceptor protein]-L-lysine = [E2 ubiquitin-conjugating enzyme]-L-cysteine + N(6)-ubiquitinyl-[acceptor protein]-L-lysine.. Its pathway is protein modification; protein ubiquitination. Its function is as follows. E3 ubiquitin-protein ligase that mediates ubiquitination and subsequent proteasomal degradation of target proteins. E3 ubiquitin ligases accept ubiquitin from an E2 ubiquitin-conjugating enzyme in the form of a thioester and then directly transfers the ubiquitin to targeted substrates. It probably triggers the ubiquitin-mediated degradation of different substrates. The polypeptide is E3 ubiquitin-protein ligase SINA-like 7 (Arabidopsis thaliana (Mouse-ear cress)).